A 705-amino-acid polypeptide reads, in one-letter code: Elongation factor G (705 aa).

Residues 8–294 (DRYRNFGIMA…AVIDYLPSPL (287 aa)) form the tr-type G domain. Residues 17–24 (AHIDAGKT), 92–96 (DTPGH), and 146–149 (NKMD) each bind GTP.

Belongs to the TRAFAC class translation factor GTPase superfamily. Classic translation factor GTPase family. EF-G/EF-2 subfamily.

The protein resides in the cytoplasm. Catalyzes the GTP-dependent ribosomal translocation step during translation elongation. During this step, the ribosome changes from the pre-translocational (PRE) to the post-translocational (POST) state as the newly formed A-site-bound peptidyl-tRNA and P-site-bound deacylated tRNA move to the P and E sites, respectively. Catalyzes the coordinated movement of the two tRNA molecules, the mRNA and conformational changes in the ribosome. This is Elongation factor G from Dinoroseobacter shibae (strain DSM 16493 / NCIMB 14021 / DFL 12).